Consider the following 680-residue polypeptide: Leucine-rich repeat protein soc-2 homolog (680 aa).

The segment covering M1–G19 has biased composition (low complexity). 2 disordered regions span residues M1–S54 and T73–A149. The segment covering G26–K49 has biased composition (gly residues). A compositionally biased stretch (low complexity) spans T73–N86. A compositionally biased stretch (gly residues) spans G87–G96. Residues S97–G106 show a composition bias toward low complexity. 20 LRR repeats span residues R161–C182, H184–L205, S207–C228, Q230–L251, S253–L274, N276–L297, N299–C320, N322–L343, S345–K367, S368–S389, G392–Q413, N416–R437, G440–W461, N463–L484, N486–L507, R509–L530, E532–L553, N555–L576, S578–C600, and N602–G623. Gly residues predominate over residues A658 to A668. Positions A658–R680 are disordered. The segment covering A669–R680 has biased composition (low complexity).

Belongs to the SHOC2 family.

Its function is as follows. Acts as a Ras effector and participates in MAPK pathway activation. Probably acts as a regulatory subunit of protein phosphatase that specifically dephosphorylates Raf kinase and stimulate Raf activity at specialized signaling complexes upon Ras activation. The chain is Leucine-rich repeat protein soc-2 homolog (Sur-8) from Drosophila simulans (Fruit fly).